Reading from the N-terminus, the 154-residue chain is SKP1-like protein 13 (154 aa).

Residues 96-154 (MLAANYLNIKDLLDLGCQTVADMITGKKPDEIRALLGIENDFTPEEEEEIRKENQWAFE) are interaction with the F-box domain of F-box proteins.

It belongs to the SKP1 family. As to quaternary structure, part of a SCF (SKP1-cullin-F-box) protein ligase complex. Interacts with ADO3/FKF1, EBF1, PP2A13, SKIP15, SKIP16, CPR1/CPR30, At1g55000, At3g61590, At1g67340, At1g78100, At3g04660, At4g38940, At4g39550 and At5g49610. As to expression, mostly expressed in inflorescences, and, to a lower extent, in seedlings and siliques. Also detected in cotyledons, leaves, pollen and seeds.

The protein resides in the nucleus. Its pathway is protein modification; protein ubiquitination. Its function is as follows. Involved in ubiquitination and subsequent proteasomal degradation of target proteins. Together with CUL1, RBX1 and a F-box protein, it forms a SCF E3 ubiquitin ligase complex. The functional specificity of this complex depends on the type of F-box protein. In the SCF complex, it serves as an adapter that links the F-box protein to CUL1. The sequence is that of SKP1-like protein 13 (ASK13) from Arabidopsis thaliana (Mouse-ear cress).